The primary structure comprises 296 residues: MSTRQLRGSAVALVTPFHKDLTVDVEALIRLVEFHLEAGTDIIIPCGTTGESPTLTEAEQASIIRTVRDASKGRIIVGAGAGTNATVEAVRLAKNAEAAGAEAILSVAPYYNKPSQEGIYQHYRHVAEAVSVPIIIYNVPGRTGCNVDAATVLRLARDFANITAVKEATDNMQQIAELLDGRPEGFSVLTGEDPLILPFMAMGGDGVISVAANQIPGAIKRLVDSVSEGNLEEARKINRKYRRLLRLNFIESNPVPVKYALTRMGMLEETYRLPLVPLSAASKAEMDRELEILGLI.

Thr-49 lines the pyruvate pocket. The active-site Proton donor/acceptor is Tyr-137. The Schiff-base intermediate with substrate role is filled by Lys-166. Ile-208 is a pyruvate binding site.

This sequence belongs to the DapA family. Homotetramer; dimer of dimers.

The protein resides in the cytoplasm. The catalysed reaction is L-aspartate 4-semialdehyde + pyruvate = (2S,4S)-4-hydroxy-2,3,4,5-tetrahydrodipicolinate + H2O + H(+). The protein operates within amino-acid biosynthesis; L-lysine biosynthesis via DAP pathway; (S)-tetrahydrodipicolinate from L-aspartate: step 3/4. In terms of biological role, catalyzes the condensation of (S)-aspartate-beta-semialdehyde [(S)-ASA] and pyruvate to 4-hydroxy-tetrahydrodipicolinate (HTPA). The chain is 4-hydroxy-tetrahydrodipicolinate synthase from Chlorobium luteolum (strain DSM 273 / BCRC 81028 / 2530) (Pelodictyon luteolum).